The chain runs to 353 residues: D-alanine--D-alanine ligase (353 aa).

Residues 135 to 344 (KMVFAQAGLA…FPQLVDRLVQ (210 aa)) form the ATP-grasp domain. 171–226 (EAQLDYPMFVKPANLGSSVGISKVRTRDELEKALDLAAEYDRRLIVEAGVTAREVE) contacts ATP. Residues Asp-297, Glu-311, and Asn-313 each coordinate Mg(2+).

Belongs to the D-alanine--D-alanine ligase family. The cofactor is Mg(2+). Mn(2+) is required as a cofactor.

The protein localises to the cytoplasm. The enzyme catalyses 2 D-alanine + ATP = D-alanyl-D-alanine + ADP + phosphate + H(+). Its pathway is cell wall biogenesis; peptidoglycan biosynthesis. Functionally, cell wall formation. This is D-alanine--D-alanine ligase from Picosynechococcus sp. (strain ATCC 27264 / PCC 7002 / PR-6) (Agmenellum quadruplicatum).